Reading from the N-terminus, the 74-residue chain is Brevinin-2Tb (74 aa).

A signal peptide spans 1 to 22 (MFTMKKSLLLFFFLGTISLSLC). A propeptide spanning residues 23–40 (QEERNADEDDGEMTEEEK) is cleaved from the precursor. Cys68 and Cys74 are joined by a disulfide.

The protein belongs to the frog skin active peptide (FSAP) family. Brevinin subfamily. As to expression, expressed by the skin glands.

The protein localises to the secreted. In terms of biological role, antimicrobial peptide. This is Brevinin-2Tb from Rana temporaria (European common frog).